Here is a 1110-residue protein sequence, read N- to C-terminus: MPRVESETYKRLQNDPSCIRNICIVAHVDHGKTSLSDSLLASNGIISQRLAGKIRFLDARPDEQLRGITMESSAISLYFRVLRKQEGSDEPLVSEHLVNLIDSPGHIDFSSEVSAASRLCDGAVVLVDVVEGVCSQTVTVLRQCWTEKLKPILVLNKIDRLITELQLTPQEAYIHLSKVIEQVNSVIGSFFANERQLDDLFWREQLEKNENAEYIEKDDSGIYFNPTDNNVIFASAIDGWGFNIGQLAKFYEQKLGAKRENLQKVLWGDFYMDPKTKKIINNKGLKGRSLKPLFTSLILENIWKIYQNIITSRDSEMVEKIAKTLNIKLLARDLRSKDDKQLLRTIMGQWLPVSTAVLLTVIEKLPSPLESQTDRLNTILVSESDTAAMDPRLLKAMKTCDKEGPVSAYVSKMLSIPREELPVESKRIASSDELMERSRKAREEALNAAKHAGMVENMAMMDLNDNSKNTSDLYKRAKDTVMTPEVGEQTKPKPSRNNDVFCVVSEPSSALDLEFEYEGEDDSDSQDNFGLDFVPTDIDPNDPLSSMFEYEEEDPLLESIKQISEDVNDEVDDIFDEKEECLVAFARIYSGTLRVGQEISVLGPKYDPKCPEEHIETAIITHLYLFMGKELVPLDVCPSGNIVGIRGLAGKVLKSGTLIEKGVQGVNLAGVNFHFTPIVRVAVEPANPVEMSKLVRGLKLLDQADPCVHTYVENTGEHILCTAGELHLERCLKDLTERFAGIEITHSEPAIPYRETFLSASDMNPPQNSQLGRGVHELLLSQYKITFRTFPLSGKVTDFLSQHQNSIKNILKTSTSSMDPVIESTGSSFLDKKSLLVAFEEVINQEEKSRELLSGFKVKLAGFGPSRVGCNILLSQDNLLGSLFEGTPAAFEYSDSIKNGFQLAVSEGPLANEPVQGMCVLVESVHKMSQDEIESIEDPRYQQHIVDLSGRLITSTRDAIHEAFLDWSPRIMWAIYSCDIQTSVDVLGKVYAVILQRHGKIISEEMKEGTPFFQIEAHVPVVEAFGLSEDIRKRTSGAAQPQLVFSGFECIDLDPFWVPTTEEELEELGDTADRENIARKHMNAIRRRKGLFIEEKVVENAEKQRTLKKN.

A tr-type G domain is found at 17 to 262; sequence SCIRNICIVA…QKLGAKRENL (246 aa). GTP is bound by residues 26–33, 102–106, and 156–159; these read AHVDHGKT, DSPGH, and NKID. Residue Ser-431 is modified to Phosphoserine.

It belongs to the TRAFAC class translation factor GTPase superfamily. Classic translation factor GTPase family.

It localises to the cytoplasm. It carries out the reaction GTP + H2O = GDP + phosphate + H(+). With respect to regulation, GTPase activity is stimulated in the presence of 60S subunits. In terms of biological role, GTPase involved in the biogenesis of the 60S ribosomal subunit and translational activation of ribosomes. Together with SDO1, may trigger the GTP-dependent release of TIF6 from 60S pre-ribosomes in the cytoplasm, thereby activating ribosomes for translation competence by allowing 80S ribosome assembly and facilitating TIF6 recycling to the nucleus, where it is required for 60S rRNA processing and nuclear export. Inhibits GTPase activity of ribosome-bound EF-2. This is Ribosome assembly protein 1 (RIA1) from Saccharomyces cerevisiae (strain ATCC 204508 / S288c) (Baker's yeast).